A 325-amino-acid polypeptide reads, in one-letter code: MIKIGIIGGAGYTANELIKILINHPKVEIKTIVSTTYPGIPIEYIHKDLIGEIKSNKLFSSEITDDIDLLFLCIGHGHSKKILKNISYKINVIDFSNDFRINKNFFFKKRIFNYGLPELNKNIINKYNNIANPGCFATAIQLSILPLAKIKLLKNNIHISAITGSTGAGRINNSKLNFSFRNNNISTYNLFNHNHINEVIQTINKLQNKYDGKIYFIPYRGGFSRGIISTLYTRIDLSFEEIKNIYDKFYKNDPFIFLSEKEIHLKQVINTNKCILNLKYIKNKLIITSIIDNLIKGASGQAVQNMNIMYNFEETCGLKLKPLGL.

Cys135 is an active-site residue.

This sequence belongs to the NAGSA dehydrogenase family. Type 1 subfamily.

It localises to the cytoplasm. It carries out the reaction N-acetyl-L-glutamate 5-semialdehyde + phosphate + NADP(+) = N-acetyl-L-glutamyl 5-phosphate + NADPH + H(+). It participates in amino-acid biosynthesis; L-arginine biosynthesis; N(2)-acetyl-L-ornithine from L-glutamate: step 3/4. In terms of biological role, catalyzes the NADPH-dependent reduction of N-acetyl-5-glutamyl phosphate to yield N-acetyl-L-glutamate 5-semialdehyde. In Karelsulcia muelleri (strain GWSS) (Sulcia muelleri), this protein is N-acetyl-gamma-glutamyl-phosphate reductase.